The following is a 743-amino-acid chain: DEAD-box ATP-dependent RNA helicase 3B, chloroplastic (743 aa).

The N-terminal 37 residues, 1–37 (MASLTLPALALALSNPGAVRLRAAAFRCWALRRRGWA), are a transit peptide targeting the chloroplast. The interval 60–79 (GSDDEDGEGPYGSDADEGFE) is disordered. The span at 61–79 (SDDEDGEGPYGSDADEGFE) shows a compositional bias: acidic residues. The Q motif signature appears at 88–116 (LAIARLGLPDELVATLEKRGITHLFPIQR). Residues 119–295 (LIPALEGRDL…RRYLNNPLTI (177 aa)) form the Helicase ATP-binding domain. 132 to 139 (AKTGTGKT) is a binding site for ATP. The short motif at 243 to 246 (DEAD) is the DEAD box element. The Helicase C-terminal domain maps to 324 to 469 (VLSDLITVYA…ISPPSIEEVL (146 aa)). A disordered region spans residues 606 to 719 (LTKISKLPAL…RSSSFGGRES (114 aa)). The span at 642–653 (GGGASRGRGGWD) shows a compositional bias: gly residues. Residues 657-671 (EDRFRRGGRSLRSDN) are compositionally biased toward basic and acidic residues. A compositionally biased stretch (low complexity) spans 688-719 (RSSSFGSRSSSYSSRGSPSFGGRSSSFGGRES). Residues 725–742 (GACFNCGESGHRATDCPN) form a CCHC-type zinc finger.

This sequence belongs to the DEAD box helicase family. DDX21/DDX50 subfamily.

The protein localises to the plastid. It is found in the chloroplast stroma. The catalysed reaction is ATP + H2O = ADP + phosphate + H(+). Functionally, nuclear genome-encoded factor involved in ribosome biogenesis in chloroplasts. Binds specific group II introns in chloroplasts and facilitates their splicing. Is required for rRNA maturation in plastids and may contribute to the assembly of the large (50S) ribosomal subunit. Required for normal development of chloroplasts. This Zea mays (Maize) protein is DEAD-box ATP-dependent RNA helicase 3B, chloroplastic.